Consider the following 84-residue polypeptide: MKTLLLTLVVVTIVCLDLGNSLICYNTMMQKVTCPEGKDKCEKYAVPVMRGKFYFSYQCTSKCHEGAYDVCCSTDLCNKSSTSG.

A signal peptide spans 1 to 21 (MKTLLLTLVVVTIVCLDLGNS). 4 cysteine pairs are disulfide-bonded: cysteine 24–cysteine 41, cysteine 34–cysteine 59, cysteine 63–cysteine 71, and cysteine 72–cysteine 77. Asparagine 78 carries an N-linked (GlcNAc...) asparagine glycan.

It belongs to the three-finger toxin family. Short-chain subfamily. In terms of tissue distribution, expressed by the venom gland.

The protein localises to the secreted. This Micrurus corallinus (Brazilian coral snake) protein is Three-finger toxin 3FTx-1.